Consider the following 184-residue polypeptide: Peptide methionine sulfoxide reductase (184 aa).

Serine 58 is subject to Phosphoserine.

It belongs to the MsrA Met sulfoxide reductase family.

The enzyme catalyses L-methionyl-[protein] + [thioredoxin]-disulfide + H2O = L-methionyl-(S)-S-oxide-[protein] + [thioredoxin]-dithiol. The catalysed reaction is [thioredoxin]-disulfide + L-methionine + H2O = L-methionine (S)-S-oxide + [thioredoxin]-dithiol. In terms of biological role, has an important function as a repair enzyme for proteins that have been inactivated by oxidation. Catalyzes the reversible oxidation-reduction of methionine sulfoxide in proteins to methionine. Also able to reduce dimethyl sulfoxide (DMSO) as well, with DMS as the product. In Saccharomyces cerevisiae (strain ATCC 204508 / S288c) (Baker's yeast), this protein is Peptide methionine sulfoxide reductase (MXR1).